We begin with the raw amino-acid sequence, 753 residues long: Transcription factor SOX-30 (753 aa).

Disordered regions lie at residues M1–A45 and A137–R161. Residues E7–P23 show a composition bias toward pro residues. The HMG box DNA-binding region spans V337 to V405. Disordered stretches follow at residues T514 to P575 and P726 to L753. 2 stretches are compositionally biased toward polar residues: residues T531–Q563 and P726–T739.

As to quaternary structure, interacts with CTNNB1, competitively inhibiting CTNNB1-TCF7L2/TCF4 interaction.

Its subcellular location is the nucleus. It is found in the cytoplasm. Its function is as follows. Acts both as a transcriptional activator and a repressor. Binds to the DNA sequence 5'-ACAAT-3' and shows a preference for guanine residues surrounding this core motif. Binds to its own promoter and activates its own transcription. Required to activate the expression of postmeiotic genes involved in spermiogenesis. Binds to the promoter region of CTNNB1 and represses its transcription which leads to inhibition of Wnt signaling. Also inhibits Wnt signaling by binding to the CTNNB1 protein, preventing interaction of CTNNB1 with TCF7L2/TCF4. The polypeptide is Transcription factor SOX-30 (SOX30) (Homo sapiens (Human)).